The sequence spans 224 residues: UPF0758 protein Tola_0183 (224 aa).

Residues 102 to 224 enclose the MPN domain; that stretch reads SLTSPQLVRR…PVSFAERGWL (123 aa). His-173, His-175, and Asp-186 together coordinate Zn(2+). Positions 173–186 match the JAMM motif motif; that stretch reads HNHPSGVAEPSHAD.

This sequence belongs to the UPF0758 family.

This chain is UPF0758 protein Tola_0183, found in Tolumonas auensis (strain DSM 9187 / NBRC 110442 / TA 4).